A 287-amino-acid chain; its full sequence is Genetic interactor of prohibitin 7, mitochondrial (287 aa).

A mitochondrion-targeting transit peptide spans 1–24 (MVLSNVKIFRLKSHRAFRIGPMIK). Residues 250–266 (SKAIISFVVFVSIYVWL) form a helical membrane-spanning segment.

Belongs to the GEP7 family.

It is found in the mitochondrion membrane. In terms of biological role, involved in respiratory growth and required for cell survival in the absence of prohibitins or GEM1. In Saccharomyces cerevisiae (strain ATCC 204508 / S288c) (Baker's yeast), this protein is Genetic interactor of prohibitin 7, mitochondrial (GEP7).